We begin with the raw amino-acid sequence, 82 residues long: ATP synthase subunit c, chloroplastic (82 aa).

A run of 2 helical transmembrane segments spans residues 4-24 and 57-77; these read IISA…AIGP and LAFM…LLFA.

The protein belongs to the ATPase C chain family. F-type ATPases have 2 components, F(1) - the catalytic core - and F(0) - the membrane proton channel. F(1) has five subunits: alpha(3), beta(3), gamma(1), delta(1), epsilon(1). F(0) has four main subunits: a(1), b(1), b'(1) and c(10-14). The alpha and beta chains form an alternating ring which encloses part of the gamma chain. F(1) is attached to F(0) by a central stalk formed by the gamma and epsilon chains, while a peripheral stalk is formed by the delta, b and b' chains.

The protein localises to the plastid. It is found in the chloroplast thylakoid membrane. Its function is as follows. F(1)F(0) ATP synthase produces ATP from ADP in the presence of a proton or sodium gradient. F-type ATPases consist of two structural domains, F(1) containing the extramembraneous catalytic core and F(0) containing the membrane proton channel, linked together by a central stalk and a peripheral stalk. During catalysis, ATP synthesis in the catalytic domain of F(1) is coupled via a rotary mechanism of the central stalk subunits to proton translocation. Functionally, key component of the F(0) channel; it plays a direct role in translocation across the membrane. A homomeric c-ring of between 10-14 subunits forms the central stalk rotor element with the F(1) delta and epsilon subunits. This chain is ATP synthase subunit c, chloroplastic, found in Thalassiosira pseudonana (Marine diatom).